Reading from the N-terminus, the 359-residue chain is Carbamoyl phosphate synthase arginine-specific small chain (359 aa).

The CPSase stretch occupies residues Met-1 to His-168. The L-glutamine site is built by Ser-45, Gly-216, and Gly-218. Residues His-168–Glu-355 form the Glutamine amidotransferase type-1 domain. The Nucleophile role is filled by Cys-243. L-glutamine contacts are provided by Leu-244, Gln-247, Asn-285, and Tyr-288. Residues His-328 and Glu-330 contribute to the active site.

This sequence belongs to the CarA family. In terms of assembly, composed of two chains; the small (or glutamine) chain promotes the hydrolysis of glutamine to ammonia, which is used by the large (or ammonia) chain to synthesize carbamoyl phosphate. Tetramer of heterodimers (alpha,beta)4.

The catalysed reaction is hydrogencarbonate + L-glutamine + 2 ATP + H2O = carbamoyl phosphate + L-glutamate + 2 ADP + phosphate + 2 H(+). It catalyses the reaction L-glutamine + H2O = L-glutamate + NH4(+). It functions in the pathway amino-acid biosynthesis; L-arginine biosynthesis; carbamoyl phosphate from bicarbonate: step 1/1. Its function is as follows. Small subunit of the glutamine-dependent carbamoyl phosphate synthetase (CPSase). CPSase catalyzes the formation of carbamoyl phosphate from the ammonia moiety of glutamine, carbonate, and phosphate donated by ATP, constituting the first step of the biosynthetic pathway leading to arginine and/or urea. The small subunit (glutamine amidotransferase) binds and cleaves glutamine to supply the large subunit with the substrate ammonia. The polypeptide is Carbamoyl phosphate synthase arginine-specific small chain (Halalkalibacterium halodurans (strain ATCC BAA-125 / DSM 18197 / FERM 7344 / JCM 9153 / C-125) (Bacillus halodurans)).